Here is a 618-residue protein sequence, read N- to C-terminus: Auxin efflux carrier component 3a (618 aa).

Topologically, residues 1-6 are extracellular; sequence MISGHD. Residues 7 to 27 form a helical membrane-spanning segment; that stretch reads FYTVMAAVVPLYVAMFLAYGS. At 28 to 38 the chain is on the cytoplasmic side; it reads VRWWGIFTPDQ. Residues 39–59 traverse the membrane as a helical segment; sequence CSGINRFVAIFAVPLLSFHFI. Residue Val51 coordinates (indol-3-yl)acetate. Residues 60-70 are Extracellular-facing; that stretch reads STNDPYAMNLR. The chain crosses the membrane as a helical span at residues 71 to 90; sequence FLAADTLQKLLVLAGLAAWS. The Cytoplasmic portion of the chain corresponds to 91–104; the sequence is RLPSRTGAPRLDWS. The helical transmembrane segment at 105 to 125 threads the bilayer; that stretch reads ITLFSLSTLPNTLVMGIPLLI. Residues Asn115 and Leu117 each contribute to the (indol-3-yl)acetate site. The Extracellular portion of the chain corresponds to 126-134; sequence AMYGPYSGS. A helical transmembrane segment spans residues 135-155; the sequence is LMVQIVVLQCIIWYTLMLFLF. (indol-3-yl)acetate is bound at residue Tyr148. Topologically, residues 156–478 are cytoplasmic; sequence EFRAARMLIA…LIRNPNTYSS (323 aa). Residues 281 to 293 are compositionally biased toward polar residues; the sequence is SLQSSRGPTPRQS. Residues 281-312 form a disordered region; it reads SLQSSRGPTPRQSNFDEHSARPPKPPATTTGA. Residues 479 to 499 traverse the membrane as a helical segment; the sequence is LLGLAWSLVAFRWHVSMPAIV. At 500-502 the chain is on the extracellular side; sequence EKS. Residues 503–523 traverse the membrane as a helical segment; that stretch reads ISILSDAGLGMAMFSLGLFMA. The Cytoplasmic segment spans residues 524–539; the sequence is LQPSIIACGKSAAVVS. The chain crosses the membrane as a helical span at residues 540 to 560; the sequence is MAVRFLAGPAVMAAASIAIGL. Topologically, residues 561-563 are extracellular; it reads RGT. The chain crosses the membrane as a helical span at residues 564 to 584; the sequence is LLHVAIVQAALPQGIVPFVFA. 2 residues coordinate (indol-3-yl)acetate: Ile578 and Val579. Over 585–597 the chain is Cytoplasmic; it reads KEYNVHPAILSTA. Residues 598–618 traverse the membrane as a helical segment; that stretch reads VIFGMLIALPITLLYYILLGL.

The protein belongs to the auxin efflux carrier (TC 2.A.69.1) family. Homodimer. Expressed in coleoptiles, roots, vascular bundles of leaves, shoots, lamina joints and vascular bundles of the lemma and filament. Expressed in stem bases, stems, leaves and young panicles.

Its subcellular location is the cell membrane. Its function is as follows. Acts as a component of the auxin efflux carrier. Involved in the polar auxin transport which may regulate crown root development and response to water stress. This is Auxin efflux carrier component 3a from Oryza sativa subsp. japonica (Rice).